Reading from the N-terminus, the 376-residue chain is MKILLFICGEGLGHTGRCLALGKEFLAAGHEVNFGAYGYSKGLVQKTGYSAYEIPSEIKLAGEAGTFDIRKSIKETLNNLSPSGFRKILRLIEKLDPDVVLSDGYYTGILAAQKRKVPVYFIGHQFNMEEFFWKKGLFAGIAGIFVKRFYNYVFSSVDGIIVPDYPLPYSVNRKNFTISRAVNDNIFFSGPLIRCRYQEAGEKAFKRPNVLSTIGAFGYRAAVFRNVLEAAKLDPSIYYTFISGPEIDPEQFSKVPENVEFTGFTENPFPYYKGSDLVITAGGHGTIMESLAFGLPILSFPDEKHAEQENNASVLEEAGYGKRMSYLTPPEVILACIREIFEDENYSKKTRRLMELAEVLDGPAAVRKFLEEKHRG.

The protein belongs to the glycosyltransferase 28 family.

This is an uncharacterized protein from Methanosarcina mazei (strain ATCC BAA-159 / DSM 3647 / Goe1 / Go1 / JCM 11833 / OCM 88) (Methanosarcina frisia).